A 484-amino-acid polypeptide reads, in one-letter code: Probable cytosol aminopeptidase (484 aa).

Residues Lys256 and Asp261 each coordinate Mn(2+). Lys268 is an active-site residue. Mn(2+)-binding residues include Asp279, Asp338, and Glu340. Arg342 is an active-site residue.

This sequence belongs to the peptidase M17 family. It depends on Mn(2+) as a cofactor.

It is found in the cytoplasm. It catalyses the reaction Release of an N-terminal amino acid, Xaa-|-Yaa-, in which Xaa is preferably Leu, but may be other amino acids including Pro although not Arg or Lys, and Yaa may be Pro. Amino acid amides and methyl esters are also readily hydrolyzed, but rates on arylamides are exceedingly low.. It carries out the reaction Release of an N-terminal amino acid, preferentially leucine, but not glutamic or aspartic acids.. In terms of biological role, presumably involved in the processing and regular turnover of intracellular proteins. Catalyzes the removal of unsubstituted N-terminal amino acids from various peptides. In Actinobacillus succinogenes (strain ATCC 55618 / DSM 22257 / CCUG 43843 / 130Z), this protein is Probable cytosol aminopeptidase.